The sequence spans 163 residues: Augmin complex subunit wac (163 aa).

A coiled-coil region spans residues 86–115; sequence ELQRILSSIEEATRDVVMLERFNAAAEERL.

As to quaternary structure, component of the augmin complex composed of dgt2, dgt3, dgt4, dgt5, dgt6, msd1, msd5 and wac. The complex interacts directly or indirectly with microtubules and is required for centrosome-independent generation of spindle microtubules. wac interacts directly (via coiled coil) with dgt2. As to expression, in adult females, detected only in the abdomen with no expression in the head or thorax (at protein level).

Its subcellular location is the cytoplasm. It is found in the cytoskeleton. The protein localises to the spindle. It localises to the spindle pole. Its function is as follows. As part of the augmin complex, plays a role in centrosome-independent generation of spindle microtubules. The complex is required for mitotic spindle assembly through its involvement in localizing gamma-tubulin to spindle microtubules. wac is dispensable for somatic mitosis and for assembly of spindle microtubules in oocytes during female meiosis but is required during female meiosis for chromosome alignment and segregation. It is required for microtubule assembly near spindle poles in oocytes. It is also required for acentrosomal microtubule nucleation and meiotic spindle formation during male meiosis. wac binds to microtubules in vitro. This chain is Augmin complex subunit wac, found in Drosophila melanogaster (Fruit fly).